A 648-amino-acid polypeptide reads, in one-letter code: Threonine--tRNA ligase (648 aa).

A TGS domain is found at 1-61 (MITITFPDGA…EEDGSIEIIT (61 aa)). The tract at residues 242–540 (DHRKLGKELD…LIETYKGAFP (299 aa)) is catalytic. Zn(2+)-binding residues include cysteine 336, histidine 387, and histidine 517.

It belongs to the class-II aminoacyl-tRNA synthetase family. Homodimer. Zn(2+) serves as cofactor.

The protein localises to the cytoplasm. It carries out the reaction tRNA(Thr) + L-threonine + ATP = L-threonyl-tRNA(Thr) + AMP + diphosphate + H(+). Its function is as follows. Catalyzes the attachment of threonine to tRNA(Thr) in a two-step reaction: L-threonine is first activated by ATP to form Thr-AMP and then transferred to the acceptor end of tRNA(Thr). Also edits incorrectly charged L-seryl-tRNA(Thr). This is Threonine--tRNA ligase from Streptococcus equi subsp. zooepidemicus (strain H70).